Reading from the N-terminus, the 216-residue chain is Thiopurine S-methyltransferase (216 aa).

4 residues coordinate S-adenosyl-L-methionine: W10, L45, E66, and R123.

It belongs to the class I-like SAM-binding methyltransferase superfamily. TPMT family.

It is found in the cytoplasm. It catalyses the reaction S-adenosyl-L-methionine + a thiopurine = S-adenosyl-L-homocysteine + a thiopurine S-methylether.. This chain is Thiopurine S-methyltransferase, found in Pseudomonas entomophila (strain L48).